Consider the following 217-residue polypeptide: ATP-binding protein BexA (217 aa).

The ABC transporter domain maps to 2–217 (IRVNNVCKKY…AYQYYNETQK (216 aa)). Residue 38 to 45 (GRNGAGKS) coordinates ATP.

The protein belongs to the ABC transporter superfamily.

It localises to the cell inner membrane. Putative ATP-binding protein, and an energy-coupling component of capsule polysaccharide export apparatus. This Haemophilus influenzae protein is ATP-binding protein BexA (bexA).